A 207-amino-acid polypeptide reads, in one-letter code: Large ribosomal subunit protein uL4 (207 aa).

The interval 48–70 (KAQKTRSEVSGGGAKPWRQKGTG) is disordered.

Belongs to the universal ribosomal protein uL4 family. In terms of assembly, part of the 50S ribosomal subunit.

One of the primary rRNA binding proteins, this protein initially binds near the 5'-end of the 23S rRNA. It is important during the early stages of 50S assembly. It makes multiple contacts with different domains of the 23S rRNA in the assembled 50S subunit and ribosome. Its function is as follows. Forms part of the polypeptide exit tunnel. This chain is Large ribosomal subunit protein uL4, found in Francisella tularensis subsp. holarctica (strain FTNF002-00 / FTA).